The primary structure comprises 265 residues: 3-methyl-2-oxobutanoate hydroxymethyltransferase (265 aa).

2 residues coordinate Mg(2+): Asp-44 and Asp-83. Residues 44–45 (DS), Asp-83, and Lys-113 each bind 3-methyl-2-oxobutanoate. Glu-115 lines the Mg(2+) pocket. Glu-183 serves as the catalytic Proton acceptor.

The protein belongs to the PanB family. Homodecamer; pentamer of dimers. Mg(2+) is required as a cofactor.

It is found in the cytoplasm. The catalysed reaction is 3-methyl-2-oxobutanoate + (6R)-5,10-methylene-5,6,7,8-tetrahydrofolate + H2O = 2-dehydropantoate + (6S)-5,6,7,8-tetrahydrofolate. The protein operates within cofactor biosynthesis; (R)-pantothenate biosynthesis; (R)-pantoate from 3-methyl-2-oxobutanoate: step 1/2. Functionally, catalyzes the reversible reaction in which hydroxymethyl group from 5,10-methylenetetrahydrofolate is transferred onto alpha-ketoisovalerate to form ketopantoate. In Leptospira interrogans serogroup Icterohaemorrhagiae serovar copenhageni (strain Fiocruz L1-130), this protein is 3-methyl-2-oxobutanoate hydroxymethyltransferase.